We begin with the raw amino-acid sequence, 920 residues long: Neurofibromin-A (920 aa).

Positions 63–291 (NKTLPLIKDL…EKMSAYFNLI (229 aa)) constitute a Ras-GAP domain. Disordered regions lie at residues 344–405 (KWLA…TTTA) and 477–508 (LGPS…GASM). Polar residues predominate over residues 346 to 369 (LATTPSGNTPSPAISNASSAHNGK). The span at 370–405 (SNNTTNNNNNNNNNNNNNNNNNNNNNNNSNKTTTTA) shows a compositional bias: low complexity. The segment covering 498–507 (PTTSLQNGAS) has biased composition (polar residues). The 162-residue stretch at 512-673 (FDECTHMLER…TSKDFITKSY (162 aa)) folds into the CRAL-TRIO domain.

In terms of biological role, regulator of the GTPase activity of Ras, mainly RasG and RasB. This is Neurofibromin-A (nfaA) from Dictyostelium discoideum (Social amoeba).